We begin with the raw amino-acid sequence, 316 residues long: Protein FLUORESCENT IN BLUE LIGHT, chloroplastic (316 aa).

Residues 1 to 26 (MAALIRCCSSFSHTSGGQPPPRDKSR) constitute a chloroplast transit peptide. The chain crosses the membrane as a helical span at residues 125-145 (MFSMPILLLVALIGATVGGLL). A coiled-coil region spans residues 144 to 175 (LLARQRKGELQRLNEQLRQINAALRRQAKIES). TPR repeat units follow at residues 203 to 236 (LISK…AQSL), 243 to 276 (KKAA…SKRE), and 283 to 316 (TEAY…LETD).

Part of the FLU-containing chloroplast membrane complex composed of FLU, CRD1, PORB, PORC, CHLP and HEMA1. Interacts with HEMA1 (via C-terminus) only in the absence of light. No interaction with HEMA2.

Its subcellular location is the plastid. It is found in the chloroplast membrane. The protein resides in the chloroplast thylakoid membrane. In terms of biological role, negative regulator of tetrapyrrole biosynthesis (including chlorophyll) in chloroplasts, probably via HEMA1 repression. Inhibits especially the magnesium ion Mg(2+) branch of tetrapyrrole biosynthesis, but independently of heme. The polypeptide is Protein FLUORESCENT IN BLUE LIGHT, chloroplastic (FLU) (Arabidopsis thaliana (Mouse-ear cress)).